Here is a 113-residue protein sequence, read N- to C-terminus: Small ribosomal subunit protein mS41 (113 aa).

The N-terminal 22 residues, 1–22, are a transit peptide targeting the mitochondrion; sequence MLILKRIFIIRNFIFPFSNCRY.

Belongs to the mitochondrion-specific ribosomal protein mS41 family. As to quaternary structure, component of the mitochondrial small ribosomal subunit (mt-SSU). Mature yeast 74S mitochondrial ribosomes consist of a small (37S) and a large (54S) subunit. The 37S small subunit contains a 15S ribosomal RNA (15S mt-rRNA) and at least 32 different proteins. The 54S large subunit contains a 21S rRNA (21S mt-rRNA) and at least 45 different proteins.

The protein localises to the mitochondrion. Its function is as follows. Component of the mitochondrial ribosome (mitoribosome), a dedicated translation machinery responsible for the synthesis of mitochondrial genome-encoded proteins, including at least some of the essential transmembrane subunits of the mitochondrial respiratory chain. The mitoribosomes are attached to the mitochondrial inner membrane and translation products are cotranslationally integrated into the membrane. mS41 is involved in telomere length regulation. The chain is Small ribosomal subunit protein mS41 (fyv4) from Schizosaccharomyces pombe (strain 972 / ATCC 24843) (Fission yeast).